Here is a 190-residue protein sequence, read N- to C-terminus: Elongation factor P (190 aa).

Lys-34 carries the N6-(3,6-diaminohexanoyl)-5-hydroxylysine modification.

It belongs to the elongation factor P family. Post-translationally, may be beta-lysylated on the epsilon-amino group of Lys-34 by the combined action of EpmA and EpmB, and then hydroxylated on the C5 position of the same residue by EpmC (if this protein is present). Lysylation is critical for the stimulatory effect of EF-P on peptide-bond formation. The lysylation moiety may extend toward the peptidyltransferase center and stabilize the terminal 3-CCA end of the tRNA. Hydroxylation of the C5 position on Lys-34 may allow additional potential stabilizing hydrogen-bond interactions with the P-tRNA.

The protein resides in the cytoplasm. Its pathway is protein biosynthesis; polypeptide chain elongation. In terms of biological role, involved in peptide bond synthesis. Alleviates ribosome stalling that occurs when 3 or more consecutive Pro residues or the sequence PPG is present in a protein, possibly by augmenting the peptidyl transferase activity of the ribosome. Modification of Lys-34 is required for alleviation. The protein is Elongation factor P of Psychrobacter arcticus (strain DSM 17307 / VKM B-2377 / 273-4).